Reading from the N-terminus, the 112-residue chain is uncharacterized protein (112 aa).

N-linked (GlcNAc...) asparagine; by host glycosylation is found at N29 and N60. Residues 66–86 (IFNGLGFILIVIFIYLLLITL) traverse the membrane as a helical segment.

It belongs to the asfivirus B117L family.

The protein localises to the host membrane. Its subcellular location is the virion. This is an uncharacterized protein from Ornithodoros (relapsing fever ticks).